The chain runs to 310 residues: tRNA dimethylallyltransferase (310 aa).

ATP is bound at residue 11–18 (GPTGVGKT). 13-18 (TGVGKT) contacts substrate.

It belongs to the IPP transferase family. Monomer. Mg(2+) is required as a cofactor.

It carries out the reaction adenosine(37) in tRNA + dimethylallyl diphosphate = N(6)-dimethylallyladenosine(37) in tRNA + diphosphate. Its function is as follows. Catalyzes the transfer of a dimethylallyl group onto the adenine at position 37 in tRNAs that read codons beginning with uridine, leading to the formation of N6-(dimethylallyl)adenosine (i(6)A). The protein is tRNA dimethylallyltransferase of Latilactobacillus sakei subsp. sakei (strain 23K) (Lactobacillus sakei subsp. sakei).